Reading from the N-terminus, the 227-residue chain is Holliday junction branch migration complex subunit RuvA (227 aa).

Residues 1–64 (MFESISGILT…EDALRLFGFS (64 aa)) are domain I. The tract at residues 65-143 (NVQERTLFLS…LTDAASCAQS (79 aa)) is domain II. The flexible linker stretch occupies residues 144 to 158 (QTDDRAAHPSNLGCA). Positions 159-227 (PHAREIEDLV…HPHAVAPAAE (69 aa)) are domain III.

This sequence belongs to the RuvA family. In terms of assembly, homotetramer. Forms an RuvA(8)-RuvB(12)-Holliday junction (HJ) complex. HJ DNA is sandwiched between 2 RuvA tetramers; dsDNA enters through RuvA and exits via RuvB. An RuvB hexamer assembles on each DNA strand where it exits the tetramer. Each RuvB hexamer is contacted by two RuvA subunits (via domain III) on 2 adjacent RuvB subunits; this complex drives branch migration. In the full resolvosome a probable DNA-RuvA(4)-RuvB(12)-RuvC(2) complex forms which resolves the HJ.

The protein resides in the cytoplasm. Its function is as follows. The RuvA-RuvB-RuvC complex processes Holliday junction (HJ) DNA during genetic recombination and DNA repair, while the RuvA-RuvB complex plays an important role in the rescue of blocked DNA replication forks via replication fork reversal (RFR). RuvA specifically binds to HJ cruciform DNA, conferring on it an open structure. The RuvB hexamer acts as an ATP-dependent pump, pulling dsDNA into and through the RuvAB complex. HJ branch migration allows RuvC to scan DNA until it finds its consensus sequence, where it cleaves and resolves the cruciform DNA. This Treponema pallidum (strain Nichols) protein is Holliday junction branch migration complex subunit RuvA.